Consider the following 239-residue polypeptide: Tubulin beta-3 chain (239 aa).

Asparagine 22 provides a ligand contact to GTP. The segment at 207 to 239 (EESNMNDLVSEYQQYQDASAEPXXEQEEDYEEA) is disordered. The segment covering 230 to 239 (XEQEEDYEEA) has biased composition (acidic residues).

This sequence belongs to the tubulin family. As to quaternary structure, dimer of alpha and beta chains. A typical microtubule is a hollow water-filled tube with an outer diameter of 25 nm and an inner diameter of 15 nM. Alpha-beta heterodimers associate head-to-tail to form protofilaments running lengthwise along the microtubule wall with the beta-tubulin subunit facing the microtubule plus end conferring a structural polarity. Microtubules usually have 13 protofilaments but different protofilament numbers can be found in some organisms and specialized cells. It depends on Mg(2+) as a cofactor.

The protein localises to the cytoplasm. Its subcellular location is the cytoskeleton. In terms of biological role, tubulin is the major constituent of microtubules, a cylinder consisting of laterally associated linear protofilaments composed of alpha- and beta-tubulin heterodimers. Microtubules grow by the addition of GTP-tubulin dimers to the microtubule end, where a stabilizing cap forms. Below the cap, tubulin dimers are in GDP-bound state, owing to GTPase activity of alpha-tubulin. This Anemia phyllitidis (Fern) protein is Tubulin beta-3 chain (TUBB3).